A 574-amino-acid chain; its full sequence is Cyclomaltodextrinase (574 aa).

Residues Asn-144, Asp-146, Asn-149, Asp-150, Gly-168, and Asp-170 each coordinate Ca(2+). Substrate contacts are provided by His-243 and Arg-323. Asp-325 serves as the catalytic Nucleophile. Residue Glu-354 is the Proton donor of the active site. Substrate contacts are provided by residues 420 to 421, Asp-465, and Arg-469; that span reads HD.

Belongs to the glycosyl hydrolase 13 family. In terms of assembly, monomer. The cofactor is Ca(2+).

The catalysed reaction is cyclomaltodextrin + H2O = linear maltodextrin. Its function is as follows. Hydrolyzes cyclodextrins. Can also act on linear maltodextrins, with the exception of maltose. The polypeptide is Cyclomaltodextrinase (Thermoanaerobacter pseudethanolicus (strain ATCC 33223 / 39E) (Clostridium thermohydrosulfuricum)).